The primary structure comprises 132 residues: CLAVATA3/ESR (CLE)-related protein ESR2 (132 aa).

Positions 1–26 (MASRMGMVAIVSLFVCALVASTSVNA) are cleaved as a signal peptide. Positions 68–132 (NRASKQLDSE…IGPPPFLDRY (65 aa)) are disordered. Hydroxyproline is present on residues Pro82 and Pro85. Pro85 carries O-linked (Ara...) hydroxyproline glycosylation. Positions 123–132 (IGPPPFLDRY) are enriched in pro residues.

It belongs to the CLV3/ESR signal peptide family. The O-glycosylation (arabinosylation) of the hydroxyproline Pro-85 enhances binding affinity of the ESR2p peptide for its receptor. In terms of tissue distribution, seed endosperm.

The protein resides in the secreted. The protein localises to the extracellular space. In terms of biological role, extracellular signal peptide that regulates cell fate. In Zea mays (Maize), this protein is CLAVATA3/ESR (CLE)-related protein ESR2.